Consider the following 364-residue polypeptide: DNA replication and repair protein RecF (364 aa).

Residue Gly30–Thr37 participates in ATP binding.

It belongs to the RecF family.

Its subcellular location is the cytoplasm. In terms of biological role, the RecF protein is involved in DNA metabolism; it is required for DNA replication and normal SOS inducibility. RecF binds preferentially to single-stranded, linear DNA. It also seems to bind ATP. The polypeptide is DNA replication and repair protein RecF (Clostridium botulinum (strain 657 / Type Ba4)).